A 328-amino-acid chain; its full sequence is Basic leucine zipper (bZIP) transcription factor atfB (328 aa).

The tract at residues 1-39 (MLPEQSAFGRSAMPGSDAVNPGPSPFAPPPNSFSGDFLG) is disordered. The span at 22 to 31 (GPSPFAPPPN) shows a compositional bias: pro residues. Residues 163–202 (KAKREKFLERNRLAASKCRQKKKEHTQLLESRYREQSDKK) form a basic motif region. Residues 163 to 226 (KAKREKFLER…LGLKNEVLKH (64 aa)) form the bZIP domain. Positions 205–219 (LVSEIARLRSEILGL) are leucine-zipper. The interval 250–313 (TTAPDLTDVP…SEASVLTENS (64 aa)) is disordered. Over residues 262–277 (ASSSEGPMTPRPQQAL) the composition is skewed to polar residues. The span at 283-305 (DPLHLEPSRADGSTDHSVRRDSE) shows a compositional bias: basic and acidic residues.

This sequence belongs to the bZIP family. ATF subfamily.

The protein resides in the nucleus. Transcription factor that acts as a key player in the regulatory circuit that integrates secondary metabolism and cellular response to oxidative stress. Regulates the genes involved in development, as well as osmotic, oxidative, and cell wall stresses. Participates in the caspofungin paradoxical effect (CPE), where fungi grow beyond the minimum inhibitory concentration of caspofungin. Plays a role in virulence. The protein is Basic leucine zipper (bZIP) transcription factor atfB of Aspergillus fumigatus (strain ATCC MYA-4609 / CBS 101355 / FGSC A1100 / Af293) (Neosartorya fumigata).